We begin with the raw amino-acid sequence, 265 residues long: Early E4 31 kDa protein (265 aa).

This sequence belongs to the adenoviridae E4 30 to 34 kDa protein family. As to quaternary structure, interacts with E1B-55k.

It localises to the host nucleus. The protein localises to the host cytoplasm. Functionally, plays a major role to prevent cellular inhibition of viral genome replication by nuclear bodies. Assembles an SCF-like E3 ubiquitin ligase complex based on the cellular proteins ELOB, ELOC, CUL5 and RBX1, in cooperation with viral E1B-55K. This viral RING-type ligase ubiquitinates cellular substrates prior to proteasomal degradation: p53/TP53, LIG4, MRE11-RAD50-NBS1 (MRN) complex, ITGA3, DAXX and BLM. In Canine adenovirus serotype 1 (strain RI261) (CAdV-1), this protein is Early E4 31 kDa protein.